The following is a 236-amino-acid chain: Small ribosomal subunit protein uS3c (236 aa).

The KH type-2 domain maps to 47–127; it reads VRKYVRSSSR…KLNMTLSQVA (81 aa).

This sequence belongs to the universal ribosomal protein uS3 family. As to quaternary structure, part of the 30S ribosomal subunit.

It is found in the plastid. The protein resides in the chloroplast. This Zygnema circumcarinatum (Green alga) protein is Small ribosomal subunit protein uS3c (rps3).